Consider the following 342-residue polypeptide: Ankyrin repeat domain-containing protein 2A (342 aa).

Residues 1–41 (MASNSEKNPLLSDEKPKSTEENKSSKPESASGSSTSSAMPG) are disordered. A compositionally biased stretch (basic and acidic residues) spans 12–26 (SDEKPKSTEENKSSK). Positions 27-37 (PESASGSSTSS) are enriched in low complexity. 4 ANK repeats span residues 217–246 (EEES…NKDE), 250–279 (EGRT…SVNA), 283–312 (NKNT…AVTL), and 316–342 (DEKT…DAFL). His-223 and Glu-246 together coordinate a 1,2-diacyl-3-O-(beta-D-galactosyl)-sn-glycerol. Tyr-294 and Arg-296 together coordinate a 1,2-diacyl-sn-glycero-3-phospho-(1'-sn-glycerol).

In terms of assembly, interacts with TOM20-4, CYTB5-E, CBR1, APX3, APX5, TOC34 and GRF6. Binds to chloroplast outer envelope membrane (OEM) protein targeting signals, as well as to chloroplasts. Interacts with OEP7. Binds to HSP17.8 via its ankyrin repeats, this interaction enhances chaperone activity and chloroplast binding. Also interacts with HSP17.4A, HSP17.6A and HSP18.1. Binds specifically to two chloroplast glycolipids, monogalactosyldiacylglycerol (MGDG) and phosphatidylglycerol (PG). As to expression, ubiquitously expressed at basal level.

It is found in the cytoplasm. The protein resides in the nucleus. Its subcellular location is the plastid. It localises to the chloroplast outer membrane. Functionally, exhibits chaperone activity toward chloroplast outer envelope membrane, mitochondrion outer membrane, endoplasmic reticulum membrane and peroxisomal proteins, by recruiting specific proteins containing a single transmembrane associated with an AKR2A-binding sequence (ABS) and subsequently binding glycolipids (e.g. monogalactosyldiacylglycerol (MGDG) and phosphatidylglycerol (PG)) present in the membrane of the target organelle. Seems to be involved in the regulation of hydrogen peroxide levels during biotic and abiotic stresses by optimizing the ascorbate peroxidase 3 (APX3) hydrogen peroxide-degrading activity. This regulation might be monitored by GRF6. Cytosolic targeting factor for chloroplast outer membrane (COM) proteins that mediates sorting and targeting of nascent chloroplast outer envelope membrane (OEM) proteins to the chloroplast. Facilitates the targeting of OEP7 to chloroplasts. Facilitates the targeting of APX3 to peroxisomes. Involved in cellular metabolism (e.g. peroxisome activity) and required for plant growth and development. The chain is Ankyrin repeat domain-containing protein 2A from Arabidopsis thaliana (Mouse-ear cress).